Consider the following 189-residue polypeptide: Holliday junction branch migration complex subunit RuvA (189 aa).

Residues 1-63 are domain I; that stretch reads MIYAMYGVLE…DDEISLYGFS (63 aa). Residues 64 to 135 form a domain II region; that stretch reads DVLKLKLFEK…ELKDSMKEFD (72 aa). Residues 135–139 are flexible linker; it reads DVTLT. A domain III region spans residues 140-189; it reads EKDKKILEAIEALVTLGFSRNQSKKAVTQILKKDDSLDDIIKKALKFLSR.

It belongs to the RuvA family. Homotetramer. Forms an RuvA(8)-RuvB(12)-Holliday junction (HJ) complex. HJ DNA is sandwiched between 2 RuvA tetramers; dsDNA enters through RuvA and exits via RuvB. An RuvB hexamer assembles on each DNA strand where it exits the tetramer. Each RuvB hexamer is contacted by two RuvA subunits (via domain III) on 2 adjacent RuvB subunits; this complex drives branch migration. In the full resolvosome a probable DNA-RuvA(4)-RuvB(12)-RuvC(2) complex forms which resolves the HJ.

The protein localises to the cytoplasm. The RuvA-RuvB-RuvC complex processes Holliday junction (HJ) DNA during genetic recombination and DNA repair, while the RuvA-RuvB complex plays an important role in the rescue of blocked DNA replication forks via replication fork reversal (RFR). RuvA specifically binds to HJ cruciform DNA, conferring on it an open structure. The RuvB hexamer acts as an ATP-dependent pump, pulling dsDNA into and through the RuvAB complex. HJ branch migration allows RuvC to scan DNA until it finds its consensus sequence, where it cleaves and resolves the cruciform DNA. This Thermosipho melanesiensis (strain DSM 12029 / CIP 104789 / BI429) protein is Holliday junction branch migration complex subunit RuvA.